The sequence spans 343 residues: Heme A synthase (343 aa).

Helical transmembrane passes span 13-33 (VAIWLFIVAAMVFAMVVVGGA), 96-116 (HRLLGRTVGAVYAIPLIVFLI), 130-150 (AMLGLGGLQGLVGWWMVSSGL), 161-181 (LMTHLGLALALFVLLIWTALD), 197-217 (GWALAFLGAVFFQSLLGALVA), 258-278 (FNHRIFAYALLLAAVVLVVLA), 294-314 (AVAAVVFLQAALGVWTLMAAV), and 318-338 (LGVLHQAGAAVLLAVATAFAW). His260 provides a ligand contact to heme. Heme is bound at residue His322.

This sequence belongs to the COX15/CtaA family. Type 2 subfamily. As to quaternary structure, interacts with CtaB. Requires heme b as cofactor.

It is found in the cell membrane. The enzyme catalyses Fe(II)-heme o + 2 A + H2O = Fe(II)-heme a + 2 AH2. Its pathway is porphyrin-containing compound metabolism; heme A biosynthesis; heme A from heme O: step 1/1. Catalyzes the conversion of heme O to heme A by two successive hydroxylations of the methyl group at C8. The first hydroxylation forms heme I, the second hydroxylation results in an unstable dihydroxymethyl group, which spontaneously dehydrates, resulting in the formyl group of heme A. In Caulobacter vibrioides (strain ATCC 19089 / CIP 103742 / CB 15) (Caulobacter crescentus), this protein is Heme A synthase.